Consider the following 1202-residue polypeptide: CHD3-type chromatin-remodeling factor CHR7 (1202 aa).

Chromo domains lie at 45-109 (GEIE…HPHL) and 142-201 (KTVD…RDKY). Residues 237-405 (RYSWSKKTNV…FALMHFLDAD (169 aa)) form the Helicase ATP-binding domain. Residue 250-257 (DEMGLGKT) coordinates ATP. The DEAH box motif lies at 356–359 (DEGH). Residues 528 to 679 (LLDKMMVKLK…HLVVGKQHLC (152 aa)) form the Helicase C-terminal domain. The disordered stretch occupies residues 838 to 872 (TSDEEEEADEPEAARQRKPRTVTRPYRKRARDNSE). Residues 853-867 (QRKPRTVTRPYRKRA) are compositionally biased toward basic residues.

The protein belongs to the SNF2/RAD54 helicase family.

It is found in the nucleus. In terms of biological role, chromatin remodeling factor that represses the expression of embryonic trait genes upon and after seed germination and thus enables the developmental switch to post-germinative growth. The sequence is that of CHD3-type chromatin-remodeling factor CHR7 from Arabidopsis thaliana (Mouse-ear cress).